We begin with the raw amino-acid sequence, 339 residues long: Ribonucleoside-diphosphate reductase subunit beta (339 aa).

Residues aspartate 87 and histidine 121 each contribute to the Fe cation site. Residue tyrosine 125 is part of the active site. Histidine 215 contributes to the Fe cation binding site.

The protein belongs to the ribonucleoside diphosphate reductase small chain family. In terms of assembly, tetramer of two alpha and two beta subunits. The cofactor is Fe cation.

The catalysed reaction is a 2'-deoxyribonucleoside 5'-diphosphate + [thioredoxin]-disulfide + H2O = a ribonucleoside 5'-diphosphate + [thioredoxin]-dithiol. Its function is as follows. Provides the precursors necessary for DNA synthesis. Catalyzes the biosynthesis of deoxyribonucleotides from the corresponding ribonucleotides. In Mycoplasma pneumoniae (strain ATCC 29342 / M129 / Subtype 1) (Mycoplasmoides pneumoniae), this protein is Ribonucleoside-diphosphate reductase subunit beta (nrdF).